The primary structure comprises 179 residues: Large ribosomal subunit protein uL6 (179 aa).

It belongs to the universal ribosomal protein uL6 family. As to quaternary structure, part of the 50S ribosomal subunit.

This protein binds to the 23S rRNA, and is important in its secondary structure. It is located near the subunit interface in the base of the L7/L12 stalk, and near the tRNA binding site of the peptidyltransferase center. In Beutenbergia cavernae (strain ATCC BAA-8 / DSM 12333 / CCUG 43141 / JCM 11478 / NBRC 16432 / NCIMB 13614 / HKI 0122), this protein is Large ribosomal subunit protein uL6.